The following is a 128-amino-acid chain: ADA histone acetyltransferase complex component 2 (128 aa).

It is found in the cytoplasm. The protein resides in the nucleus. The polypeptide is ADA histone acetyltransferase complex component 2 (AHC2) (Saccharomyces cerevisiae (strain ATCC 204508 / S288c) (Baker's yeast)).